The chain runs to 526 residues: Sterol 14-alpha demethylase CYP51A (526 aa).

A helical transmembrane segment spans residues Ile-27 to Phe-47. A lanosterol-binding site is contributed by Tyr-123. A heme-binding site is contributed by Cys-470.

Belongs to the cytochrome P450 family. Heme serves as cofactor.

The protein resides in the endoplasmic reticulum membrane. It catalyses the reaction a 14alpha-methyl steroid + 3 reduced [NADPH--hemoprotein reductase] + 3 O2 = a Delta(14) steroid + formate + 3 oxidized [NADPH--hemoprotein reductase] + 4 H2O + 4 H(+). It carries out the reaction a 14alpha-methyl steroid + reduced [NADPH--hemoprotein reductase] + O2 = a 14alpha-hydroxymethyl steroid + oxidized [NADPH--hemoprotein reductase] + H2O + H(+). The catalysed reaction is a 14alpha-hydroxymethyl steroid + reduced [NADPH--hemoprotein reductase] + O2 = a 14alpha-formyl steroid + oxidized [NADPH--hemoprotein reductase] + 2 H2O + H(+). The enzyme catalyses a 14alpha-formyl steroid + reduced [NADPH--hemoprotein reductase] + O2 = a Delta(14) steroid + formate + oxidized [NADPH--hemoprotein reductase] + H2O + 2 H(+). It catalyses the reaction lanosterol + 3 reduced [NADPH--hemoprotein reductase] + 3 O2 = 4,4-dimethyl-5alpha-cholesta-8,14,24-trien-3beta-ol + formate + 3 oxidized [NADPH--hemoprotein reductase] + 4 H2O + 4 H(+). It carries out the reaction lanosterol + reduced [NADPH--hemoprotein reductase] + O2 = 32-hydroxylanosterol + oxidized [NADPH--hemoprotein reductase] + H2O + H(+). The catalysed reaction is 32-hydroxylanosterol + reduced [NADPH--hemoprotein reductase] + O2 = 32-oxolanosterol + oxidized [NADPH--hemoprotein reductase] + 2 H2O + H(+). The enzyme catalyses 32-oxolanosterol + reduced [NADPH--hemoprotein reductase] + O2 = 4,4-dimethyl-5alpha-cholesta-8,14,24-trien-3beta-ol + formate + oxidized [NADPH--hemoprotein reductase] + H2O + 2 H(+). It catalyses the reaction eburicol + 3 reduced [NADPH--hemoprotein reductase] + 3 O2 = 14-demethyleburicol + formate + 3 oxidized [NADPH--hemoprotein reductase] + 4 H2O + 4 H(+). It carries out the reaction eburicol + reduced [NADPH--hemoprotein reductase] + O2 = 32-hydroxyeburicol + oxidized [NADPH--hemoprotein reductase] + H2O + H(+). The catalysed reaction is 32-hydroxyeburicol + reduced [NADPH--hemoprotein reductase] + O2 = 32-oxoeburicol + oxidized [NADPH--hemoprotein reductase] + 2 H2O + H(+). The enzyme catalyses 32-oxoeburicol + reduced [NADPH--hemoprotein reductase] + O2 = 14-demethyleburicol + formate + oxidized [NADPH--hemoprotein reductase] + H2O + 2 H(+). It participates in steroid metabolism; ergosterol biosynthesis. Functionally, together with cyp51A and cyp51C, encodes the sterol 14alpha-demethylase that plays a critical role in the third module of ergosterol biosynthesis pathway, being ergosterol the major sterol component in fungal membranes that participates in a variety of functions. Essential for ascospore production. The third module or late pathway involves the ergosterol synthesis itself through consecutive reactions that mainly occur in the endoplasmic reticulum (ER) membrane. In filamentous fungi, during the initial step of this module, lanosterol (lanosta-8,24-dien-3beta-ol) can be metabolized to eburicol. Sterol 14alpha-demethylase catalyzes the three-step oxidative removal of the 14alpha-methyl group (C-32) of both these sterols in the form of formate, and converts eburicol and lanosterol to 14-demethyleburicol (4,4,24-trimethylergosta-8,14,24(28)-trienol) and 4,4-dimethyl-5alpha-cholesta-8,14,24-trien-3beta-ol, respectively, which are further metabolized by other enzymes in the pathway to ergosterol. Can also use substrates not intrinsic to fungi, such as 24,25-dihydrolanosterol (DHL), producing 4,4'-dimethyl-8,14-cholestadien-3-beta-ol, but at lower rates than the endogenous substrates. In Gibberella zeae (strain ATCC MYA-4620 / CBS 123657 / FGSC 9075 / NRRL 31084 / PH-1) (Wheat head blight fungus), this protein is Sterol 14-alpha demethylase CYP51A.